The chain runs to 359 residues: tRNA-specific 2-thiouridylase MnmA (359 aa).

ATP is bound by residues 6–13 and Leu-32; that span reads AMSGGVDS. Residue Cys-101 is the Nucleophile of the active site. Cys-101 and Cys-193 are oxidised to a cystine. Gly-125 lines the ATP pocket. An interaction with tRNA region spans residues 143-145; it reads KDQ. Residue Cys-193 is the Cysteine persulfide intermediate of the active site.

The protein belongs to the MnmA/TRMU family.

It is found in the cytoplasm. It catalyses the reaction S-sulfanyl-L-cysteinyl-[protein] + uridine(34) in tRNA + AH2 + ATP = 2-thiouridine(34) in tRNA + L-cysteinyl-[protein] + A + AMP + diphosphate + H(+). In terms of biological role, catalyzes the 2-thiolation of uridine at the wobble position (U34) of tRNA, leading to the formation of s(2)U34. This Mycobacterium sp. (strain KMS) protein is tRNA-specific 2-thiouridylase MnmA.